Here is a 362-residue protein sequence, read N- to C-terminus: Fe-S cluster assembly protein DRE2 (362 aa).

Residues 1 to 28 are disordered; sequence MAPGLDLTPDFHPPTTTTTTTNNAPPQQ. Low complexity predominate over residues 15-28; sequence TTTTTTTNNAPPQQ. The segment at 24–165 is N-terminal SAM-like domain; sequence APPQQRTLLL…KPEYAEEEAV (142 aa). The interval 166 to 254 is linker; it reads PLRFGKKKAA…EETLLTEEDL (89 aa). [2Fe-2S] cluster is bound by residues Cys-264, Cys-275, Cys-278, and Cys-280. A fe-S binding site A region spans residues 264-280; the sequence is CQPQPGKKRRACKDCTC. Positions 325, 328, 336, and 339 each coordinate [4Fe-4S] cluster. Short sequence motifs (cx2C motif) lie at residues 325 to 328 and 336 to 339; these read CGSC and CSDC. The tract at residues 325-339 is fe-S binding site B; it reads CGSCYLGDAFRCSDC.

It belongs to the anamorsin family. In terms of assembly, monomer. Interacts with TAH18. Interacts with MIA40. [2Fe-2S] cluster is required as a cofactor. It depends on [4Fe-4S] cluster as a cofactor.

It is found in the cytoplasm. The protein resides in the mitochondrion intermembrane space. Functionally, component of the cytosolic iron-sulfur (Fe-S) protein assembly (CIA) machinery required for the maturation of extramitochondrial Fe-S proteins. Part of an electron transfer chain functioning in an early step of cytosolic Fe-S biogenesis, facilitating the de novo assembly of a [4Fe-4S] cluster on the scaffold complex CFD1-NBP35. Electrons are transferred to DRE2 from NADPH via the FAD- and FMN-containing protein TAH18. TAH18-DRE2 are also required for the assembly of the diferric tyrosyl radical cofactor of ribonucleotide reductase (RNR), probably by providing electrons for reduction during radical cofactor maturation in the catalytic small subunit RNR2. This is Fe-S cluster assembly protein DRE2 from Chaetomium globosum (strain ATCC 6205 / CBS 148.51 / DSM 1962 / NBRC 6347 / NRRL 1970) (Soil fungus).